Reading from the N-terminus, the 129-residue chain is Small ribosomal subunit protein uS11 (129 aa).

Belongs to the universal ribosomal protein uS11 family. In terms of assembly, part of the 30S ribosomal subunit.

Functionally, located on the platform of the 30S subunit. In Methanocaldococcus jannaschii (strain ATCC 43067 / DSM 2661 / JAL-1 / JCM 10045 / NBRC 100440) (Methanococcus jannaschii), this protein is Small ribosomal subunit protein uS11.